Consider the following 360-residue polypeptide: Mitogen-activated protein kinase 1 (360 aa).

N-acetylalanine is present on Ala2. The Protein kinase domain maps to 25–313; the sequence is YTNLSYIGEG…VEQALAHPYL (289 aa). Ser29 carries the phosphoserine; by SGK1 modification. Residues 31–39 and Lys54 contribute to the ATP site; that span reads IGEGAYGMV. Asp149 serves as the catalytic Proton acceptor. Thr185 carries the post-translational modification Phosphothreonine; by MAP2K1 and MAP2K2. Positions 185–187 match the TXY motif; it reads TEY. Tyr187 is subject to Phosphotyrosine; by MAP2K1 and MAP2K2. Thr190 carries the phosphothreonine; by autocatalysis modification. Phosphoserine occurs at positions 246 and 248. Residues 259-277 mediate DNA binding; the sequence is KARNYLLSLPHKNKVPWNR. Phosphoserine is present on Ser284. Residues 318–322 carry the Cytoplasmic retention motif motif; the sequence is DPSDE. A Nuclear translocation motif motif is present at residues 327–333; the sequence is APFKFDM.

It belongs to the protein kinase superfamily. CMGC Ser/Thr protein kinase family. MAP kinase subfamily. Binds both upstream activators and downstream substrates in multimolecular complexes. This interaction inhibits its tyrosine-kinase activity. Interacts with ADAM15, ARHGEF2, ARRB2, DAPK1 (via death domain), HSF4, IER3, IPO7, NISCH, SGK1, and isoform 1 of NEK2. Interacts (via phosphorylated form) with TPR (via C-terminal region and phosphorylated form); the interaction requires dimerization of MAPK1/ERK2 and increases following EGF stimulation. Interacts with MAP2K1. Interacts with DUSP6. Interacts (phosphorylated form) with CAV2 ('Tyr-19'-phosphorylated form); the interaction, promoted by insulin, leads to nuclear location and MAPK1 activation. Interacts with MORG1, PEA15 and MKNK2. MKNK2 isoform 1 binding prevents from dephosphorylation and inactivation. Interacts with DCC. The phosphorylated form interacts with PML (isoform PML-4). Interacts with STYX. Interacts with CDK2AP2. Interacts with CAVIN4. Interacts with DUSP7; the interaction enhances DUSP7 phosphatase activity. Interacts with GIT1; this interaction is necessary for MAPK1 localization to focal adhesions. Interacts with ZNF263. Interacts with phosphoglycerate kinase PGK1; the interaction is direct, occurs under hypoxic conditions, and promotes interaction between PGK1 and PIN1. As to quaternary structure, (Microbial infection) Interacts with HIV-1 Nef through its SH3 domain. Mg(2+) serves as cofactor. Phosphorylated upon KIT and FLT3 signaling. Dually phosphorylated on Thr-185 and Tyr-187, which activates the enzyme. Undergoes regulatory phosphorylation on additional residues such as Ser-246 and Ser-248 in the kinase insert domain (KID) These phosphorylations, which are probably mediated by more than one kinase, are important for binding of MAPK1/ERK2 to importin-7 (IPO7) and its nuclear translocation. In addition, autophosphorylation of Thr-190 was shown to affect the subcellular localization of MAPK1/ERK2 as well. Ligand-activated ALK induces tyrosine phosphorylation. Dephosphorylated by PTPRJ at Tyr-187. Phosphorylation on Ser-29 by SGK1 results in its activation by enhancing its interaction with MAP2K1/MEK1 and MAP2K2/MEK2. DUSP3 and DUSP6 dephosphorylate specifically MAPK1/ERK2 and MAPK3/ERK1 whereas DUSP9 dephosphorylates a broader range of MAPKs. Dephosphorylated by DUSP1 and DUSP2 at Thr-185 and Tyr-187. In terms of processing, ISGylated. Post-translationally, ubiquitinated by TRIM15 via 'Lys-63'-linked ubiquitination; leading to activation. Deubiquitinated by CYLD.

It localises to the cytoplasm. The protein localises to the cytoskeleton. The protein resides in the spindle. It is found in the nucleus. Its subcellular location is the microtubule organizing center. It localises to the centrosome. The protein localises to the membrane. The protein resides in the caveola. It is found in the cell junction. Its subcellular location is the focal adhesion. The catalysed reaction is L-seryl-[protein] + ATP = O-phospho-L-seryl-[protein] + ADP + H(+). It carries out the reaction L-threonyl-[protein] + ATP = O-phospho-L-threonyl-[protein] + ADP + H(+). With respect to regulation, phosphorylated by MAP2K1/MEK1 and MAP2K2/MEK2 on Thr-185 and Tyr-187 in response to external stimuli like insulin or NGF. Both phosphorylations are required for activity. This phosphorylation causes dramatic conformational changes, which enable full activation and interaction of MAPK1/ERK2 with its substrates. Phosphorylation on Ser-29 by SGK1 results in its activation by enhancing its interaction with MAP2K1/MEK1 and MAP2K2/MEK2. Dephosphorylated and inactivated by DUSP1, DUSP3, DUSP6 and DUSP9. Inactivated by pyrimidylpyrrole inhibitors. Functionally, serine/threonine kinase which acts as an essential component of the MAP kinase signal transduction pathway. MAPK1/ERK2 and MAPK3/ERK1 are the 2 MAPKs which play an important role in the MAPK/ERK cascade. They participate also in a signaling cascade initiated by activated KIT and KITLG/SCF. Depending on the cellular context, the MAPK/ERK cascade mediates diverse biological functions such as cell growth, adhesion, survival and differentiation through the regulation of transcription, translation, cytoskeletal rearrangements. The MAPK/ERK cascade also plays a role in initiation and regulation of meiosis, mitosis, and postmitotic functions in differentiated cells by phosphorylating a number of transcription factors. About 160 substrates have already been discovered for ERKs. Many of these substrates are localized in the nucleus, and seem to participate in the regulation of transcription upon stimulation. However, other substrates are found in the cytosol as well as in other cellular organelles, and those are responsible for processes such as translation, mitosis and apoptosis. Moreover, the MAPK/ERK cascade is also involved in the regulation of the endosomal dynamics, including lysosome processing and endosome cycling through the perinuclear recycling compartment (PNRC); as well as in the fragmentation of the Golgi apparatus during mitosis. The substrates include transcription factors (such as ATF2, BCL6, ELK1, ERF, FOS, HSF4 or SPZ1), cytoskeletal elements (such as CANX, CTTN, GJA1, MAP2, MAPT, PXN, SORBS3 or STMN1), regulators of apoptosis (such as BAD, BTG2, CASP9, DAPK1, IER3, MCL1 or PPARG), regulators of translation (such as EIF4EBP1 and FXR1) and a variety of other signaling-related molecules (like ARHGEF2, DCC, FRS2 or GRB10). Protein kinases (such as RAF1, RPS6KA1/RSK1, RPS6KA3/RSK2, RPS6KA2/RSK3, RPS6KA6/RSK4, SYK, MKNK1/MNK1, MKNK2/MNK2, RPS6KA5/MSK1, RPS6KA4/MSK2, MAPKAPK3 or MAPKAPK5) and phosphatases (such as DUSP1, DUSP4, DUSP6 or DUSP16) are other substrates which enable the propagation the MAPK/ERK signal to additional cytosolic and nuclear targets, thereby extending the specificity of the cascade. Mediates phosphorylation of TPR in response to EGF stimulation. May play a role in the spindle assembly checkpoint. Phosphorylates PML and promotes its interaction with PIN1, leading to PML degradation. Phosphorylates CDK2AP2. Phosphorylates phosphoglycerate kinase PGK1 under hypoxic conditions to promote its targeting to the mitochondrion and suppress the formation of acetyl-coenzyme A from pyruvate. In terms of biological role, acts as a transcriptional repressor. Binds to a [GC]AAA[GC] consensus sequence. Repress the expression of interferon gamma-induced genes. Seems to bind to the promoter of CCL5, DMP1, IFIH1, IFITM1, IRF7, IRF9, LAMP3, OAS1, OAS2, OAS3 and STAT1. Transcriptional activity is independent of kinase activity. The polypeptide is Mitogen-activated protein kinase 1 (Homo sapiens (Human)).